A 750-amino-acid polypeptide reads, in one-letter code: Photosystem I P700 chlorophyll a apoprotein A1 (750 aa).

Transmembrane regions (helical) follow at residues 70–93 (VFSA…FHGA), 156–179 (LYCT…FHYH), 195–219 (LNHH…HVSL), 291–309 (IAHH…GHMY), 346–369 (WHAQ…HHMY), 385–411 (LSLF…IFMV), 433–455 (AIIS…LYIH), and 531–549 (FLVH…LILL). Residues Cys-573 and Cys-582 each coordinate [4Fe-4S] cluster. 2 helical membrane passes run 589–610 (HVFL…HFSW) and 664–686 (LSAY…MFLF). Position 675 (His-675) interacts with chlorophyll a'. Residues Met-683 and Tyr-691 each contribute to the chlorophyll a site. Residue Trp-692 coordinates phylloquinone. The chain crosses the membrane as a helical span at residues 724-744 (AVGVTHYLLGGIATTWAFFLA).

Belongs to the PsaA/PsaB family. As to quaternary structure, the PsaA/B heterodimer binds the P700 chlorophyll special pair and subsequent electron acceptors. PSI consists of a core antenna complex that captures photons, and an electron transfer chain that converts photonic excitation into a charge separation. The eukaryotic PSI reaction center is composed of at least 11 subunits. It depends on P700 is a chlorophyll a/chlorophyll a' dimer, A0 is one or more chlorophyll a, A1 is one or both phylloquinones and FX is a shared 4Fe-4S iron-sulfur center. as a cofactor.

It localises to the plastid. Its subcellular location is the chloroplast thylakoid membrane. It catalyses the reaction reduced [plastocyanin] + hnu + oxidized [2Fe-2S]-[ferredoxin] = oxidized [plastocyanin] + reduced [2Fe-2S]-[ferredoxin]. Its function is as follows. PsaA and PsaB bind P700, the primary electron donor of photosystem I (PSI), as well as the electron acceptors A0, A1 and FX. PSI is a plastocyanin-ferredoxin oxidoreductase, converting photonic excitation into a charge separation, which transfers an electron from the donor P700 chlorophyll pair to the spectroscopically characterized acceptors A0, A1, FX, FA and FB in turn. Oxidized P700 is reduced on the lumenal side of the thylakoid membrane by plastocyanin. The polypeptide is Photosystem I P700 chlorophyll a apoprotein A1 (Cucumis sativus (Cucumber)).